An 89-amino-acid polypeptide reads, in one-letter code: Small ribosomal subunit protein bS20 (89 aa).

This sequence belongs to the bacterial ribosomal protein bS20 family.

Functionally, binds directly to 16S ribosomal RNA. The sequence is that of Small ribosomal subunit protein bS20 from Helicobacter acinonychis (strain Sheeba).